The chain runs to 50 residues: MEHTTQCKSKQGKPCDCQSKCGCQDCKESCGCKSSAVDNCKCSSCKCASK.

Residues C7, C15, C17, C21, C23, C26, C30, C32, C40, C42, C45, and C47 each coordinate Zn(2+).

This sequence belongs to the metallothionein superfamily.

The protein resides in the cytoplasm. Its subcellular location is the nucleus. Its function is as follows. Metallothionein involved in tolerance to zinc and cadmium. Binds four zinc ions. The polypeptide is Metallothionein zym1 (zym1) (Schizosaccharomyces pombe (strain 972 / ATCC 24843) (Fission yeast)).